Consider the following 341-residue polypeptide: Glyceraldehyde-3-phosphate dehydrogenase 2 (341 aa).

Residues Arg13–Ile14, Asp35, and Lys85 contribute to the NAD(+) site. Residues Ser157–Thr159, Thr188, Thr217–Gly218, and Arg240 contribute to the D-glyceraldehyde 3-phosphate site. Cys158 serves as the catalytic Nucleophile. Residue Asn322 participates in NAD(+) binding.

This sequence belongs to the glyceraldehyde-3-phosphate dehydrogenase family. Homotetramer.

It is found in the cytoplasm. The enzyme catalyses D-glyceraldehyde 3-phosphate + phosphate + NAD(+) = (2R)-3-phospho-glyceroyl phosphate + NADH + H(+). It functions in the pathway carbohydrate degradation; glycolysis; pyruvate from D-glyceraldehyde 3-phosphate: step 1/5. This is Glyceraldehyde-3-phosphate dehydrogenase 2 from Caenorhabditis briggsae.